Here is a 73-residue protein sequence, read N- to C-terminus: uncharacterized protein (73 aa).

It belongs to the asfivirus DP63R family.

This is an uncharacterized protein from Ornithodoros (relapsing fever ticks).